We begin with the raw amino-acid sequence, 352 residues long: RAD51-associated protein 1 (352 aa).

Residues 1–10 (MVRPVRHKKP) show a composition bias toward basic residues. 2 disordered regions span residues 1 to 78 (MVRP…TFSI) and 115 to 144 (TNVQ…HISN). Phosphoserine occurs at positions 19 and 21. Residues 30–49 (VPLNKKSRTAPKELKQDKPK) are interaction with DNA. Basic and acidic residues predominate over residues 39 to 72 (APKELKQDKPKPNLNNLRKEEIPVQEKTPKKRLP). The residue at position 66 (Thr-66) is a Phosphothreonine. Ser-120 and Ser-124 each carry phosphoserine. Polar residues predominate over residues 132-144 (KIETMNKSPHISN). Residues 154-159 (LDKITV) carry the SIM motif motif. Residues 162 to 323 (DVGGVQGKRK…RSSSSPLVVV (162 aa)) are disordered. The segment covering 188-221 (SDGDSANDTEPDFAPGEDSEDDSDFCESEDNDED) has biased composition (acidic residues). Residues 229 to 247 (VKEIKKKEVKVKSPVEKKE) are compositionally biased toward basic and acidic residues. Positions 243–304 (VEKKEKKSKS…PSAESKKPKW (62 aa)) are interaction with DNA. Residue Lys-251 forms a Glycyl lysine isopeptide (Lys-Gly) (interchain with G-Cter in ubiquitin; alternate) linkage. Lys-269 participates in a covalent cross-link: Glycyl lysine isopeptide (Lys-Gly) (interchain with G-Cter in SUMO). A compositionally biased stretch (polar residues) spans 270 to 284 (SESQSLPKKVSLSSD). Ser-280 carries the phosphoserine modification. A WVPP motif motif is present at residues 304 to 307 (WVPP). The segment covering 306–323 (PPAASGGSRSSSSPLVVV) has biased composition (low complexity). Positions 313–352 (SRSSSSPLVVVSVKSPNQSLRLGLSRLARVKPLHPNATST) are interaction with RAD51. Residue Ser-327 is modified to Phosphoserine.

As to quaternary structure, monomer; elongated monodisperse monomer. Interacts (via C-terminal region) with RAD51; the interaction is direct. Interacts (via SIM motif) with WDR48/UAF1; WDR48/UAF1 and RAD51AP1 cooperate together to stimulate RAD51-mediated homologous recombination (HR). Interacts (via WVPP motif) with DMC1; the interaction is direct. Interacts with PALB2. Interacts with RAD52. Does not interact with DMC1; lack of interaction is caused by the absence of the WVPP motif in this isoform. Sumoylation with SUMO2/3 by NSMCE2/MMS21 promotes stabilization, possibly by preventing ubiquitination. Sumoylation is required for alternative lengthening of telomeres (ALT) pathway. As to expression, highly expressed in testis and thymus. Lower levels in colon and small intestine. Little or no expression in spleen, prostate, ovary and peripheral blood leukocytes.

It is found in the chromosome. It localises to the nucleus. The protein localises to the telomere. Its function is as follows. Structure-specific DNA-binding protein involved in DNA repair by promoting RAD51-mediated homologous recombination. Acts by stimulating D-Loop formation by RAD51: specifically enhances joint molecule formation through its structure-specific DNA interaction and its interaction with RAD51. Binds single-stranded DNA (ssDNA), double-stranded DNA (dsDNA) and secondary DNA structures, such as D-loop structures: has a strong preference for branched-DNA structures that are obligatory intermediates during joint molecule formation. Cooperates with WDR48/UAF1 to stimulate RAD51-mediated homologous recombination: both WDR48/UAF1 and RAD51AP1 have coordinated role in DNA-binding during homologous recombination and DNA repair. WDR48/UAF1 and RAD51AP1 also have a coordinated role in DNA-binding to promote USP1-mediated deubiquitination of FANCD2. Also involved in meiosis by promoting DMC1-mediated homologous meiotic recombination. Key mediator of alternative lengthening of telomeres (ALT) pathway, a homology-directed repair mechanism of telomere elongation that controls proliferation in aggressive cancers, by stimulating homologous recombination. May also bind RNA; additional evidences are however required to confirm RNA-binding in vivo. The protein is RAD51-associated protein 1 of Homo sapiens (Human).